A 351-amino-acid chain; its full sequence is Anthranilate phosphoribosyltransferase (351 aa).

Residues Gly-84, 87–88 (GD), 95–98 (NISS), 113–121 (KHGNRGASS), and Ala-125 each bind 5-phospho-alpha-D-ribose 1-diphosphate. Gly-84 contributes to the anthranilate binding site. Ser-97 lines the Mg(2+) pocket. Position 116 (Asn-116) interacts with anthranilate. Arg-171 provides a ligand contact to anthranilate. Mg(2+) contacts are provided by Asp-229 and Lys-230.

It belongs to the anthranilate phosphoribosyltransferase family. In terms of assembly, homodimer. The cofactor is Mg(2+).

It catalyses the reaction N-(5-phospho-beta-D-ribosyl)anthranilate + diphosphate = 5-phospho-alpha-D-ribose 1-diphosphate + anthranilate. Its pathway is amino-acid biosynthesis; L-tryptophan biosynthesis; L-tryptophan from chorismate: step 2/5. In terms of biological role, catalyzes the transfer of the phosphoribosyl group of 5-phosphorylribose-1-pyrophosphate (PRPP) to anthranilate to yield N-(5'-phosphoribosyl)-anthranilate (PRA). The polypeptide is Anthranilate phosphoribosyltransferase (Clavibacter michiganensis subsp. michiganensis (strain NCPPB 382)).